A 286-amino-acid chain; its full sequence is 4-diphosphocytidyl-2-C-methyl-D-erythritol kinase (286 aa).

K11 is an active-site residue. 93–103 provides a ligand contact to ATP; the sequence is PFGAGLGGGSS. D135 is a catalytic residue.

This sequence belongs to the GHMP kinase family. IspE subfamily.

It catalyses the reaction 4-CDP-2-C-methyl-D-erythritol + ATP = 4-CDP-2-C-methyl-D-erythritol 2-phosphate + ADP + H(+). Its pathway is isoprenoid biosynthesis; isopentenyl diphosphate biosynthesis via DXP pathway; isopentenyl diphosphate from 1-deoxy-D-xylulose 5-phosphate: step 3/6. Catalyzes the phosphorylation of the position 2 hydroxy group of 4-diphosphocytidyl-2C-methyl-D-erythritol. The chain is 4-diphosphocytidyl-2-C-methyl-D-erythritol kinase from Prosthecochloris aestuarii (strain DSM 271 / SK 413).